Reading from the N-terminus, the 280-residue chain is Bifunctional protein FolD (280 aa).

NADP(+)-binding positions include 164-166 (GRS), S189, and V230.

This sequence belongs to the tetrahydrofolate dehydrogenase/cyclohydrolase family. Homodimer.

It carries out the reaction (6R)-5,10-methylene-5,6,7,8-tetrahydrofolate + NADP(+) = (6R)-5,10-methenyltetrahydrofolate + NADPH. The catalysed reaction is (6R)-5,10-methenyltetrahydrofolate + H2O = (6R)-10-formyltetrahydrofolate + H(+). It functions in the pathway one-carbon metabolism; tetrahydrofolate interconversion. Catalyzes the oxidation of 5,10-methylenetetrahydrofolate to 5,10-methenyltetrahydrofolate and then the hydrolysis of 5,10-methenyltetrahydrofolate to 10-formyltetrahydrofolate. The protein is Bifunctional protein FolD of Geotalea daltonii (strain DSM 22248 / JCM 15807 / FRC-32) (Geobacter daltonii).